A 149-amino-acid chain; its full sequence is NADH-ubiquinone oxidoreductase chain 6 (149 aa).

Helical transmembrane passes span 23–43 (ILMLSSLILLTLFLSLIFYFI), 51–71 (MMMILIILGGMLIIFMYMISL), 83–103 (LSVTFTMMLILIPYDSFMTKL), and 114–134 (VNFVNMIILMMIFLIVMLTII).

It belongs to the complex I subunit 6 family.

The protein resides in the mitochondrion membrane. The enzyme catalyses a ubiquinone + NADH + 5 H(+)(in) = a ubiquinol + NAD(+) + 4 H(+)(out). Its function is as follows. Core subunit of the mitochondrial membrane respiratory chain NADH dehydrogenase (Complex I) that is believed to belong to the minimal assembly required for catalysis. Complex I functions in the transfer of electrons from NADH to the respiratory chain. The immediate electron acceptor for the enzyme is believed to be ubiquinone. This Rhipicephalus sanguineus (Brown dog tick) protein is NADH-ubiquinone oxidoreductase chain 6 (ND6).